Reading from the N-terminus, the 136-residue chain is Histone H3.2 (136 aa).

A disordered region spans residues M1 to Y42. An N6,N6,N6-trimethyllysine; alternate modification is found at K5. At K5 the chain carries N6,N6-dimethyllysine; alternate. 2 positions are modified to N6-methyllysine; alternate: K5 and K10. K10 is subject to N6-acetyllysine; alternate. Phosphoserine is present on S11. An N6,N6-dimethyllysine; alternate modification is found at K15. An N6-acetyllysine; alternate mark is found at K15, K19, K24, K28, and K37. An N6-methyllysine; alternate mark is found at K19, K24, K28, and K37. 2 positions are modified to N6,N6,N6-trimethyllysine; alternate: K28 and K37. An N6,N6-dimethyllysine; alternate mark is found at K28 and K37. An N6-acetyllysine mark is found at K57 and K65. N6,N6,N6-trimethyllysine; alternate is present on K80. K80 carries the post-translational modification N6,N6-dimethyllysine; alternate. N6-methyllysine; alternate is present on K80.

This sequence belongs to the histone H3 family. As to quaternary structure, the nucleosome is a histone octamer containing two molecules each of H2A, H2B, H3 and H4 assembled in one H3-H4 heterotetramer and two H2A-H2B heterodimers. The octamer wraps approximately 147 bp of DNA. In terms of processing, phosphorylated to form H3S10ph. H3S10ph promotes subsequent H3K14ac formation and is required for transcriptional activation through TBP recruitment to the promoters. Mono-, di- and trimethylated by the COMPASS complex to form H3K4me1/2/3. H3K4me activates gene expression by regulating transcription elongation and plays a role in telomere length maintenance. H3K4me enrichment correlates with transcription levels, and occurs in a 5' to 3' gradient with H3K4me3 enrichment at the 5'-end of genes, shifting to H3K4me2 and then H3K4me1. Methylated by SET2 to form H3K36me. H3K36me represses gene expression. Methylated by DOT1 to form H3K79me. H3K79me is required for association of SIR proteins with telomeric regions and for telomeric silencing. The COMPASS-mediated formation of H3K4me2/3 and the DOT1-mediated formation of H3K79me require H2BK123ub1. Post-translationally, acetylation of histone H3 leads to transcriptional activation. H3K14ac formation by GCN5 is promoted by H3S10ph. H3K14ac can also be formed by ESA1. H3K56ac formation occurs predominantly in newly synthesized H3 molecules during G1, S and G2/M of the cell cycle and may be involved in DNA repair.

The protein localises to the nucleus. It is found in the chromosome. Functionally, core component of nucleosome. Nucleosomes wrap and compact DNA into chromatin, limiting DNA accessibility to the cellular machineries which require DNA as a template. Histones thereby play a central role in transcription regulation, DNA repair, DNA replication and chromosomal stability. DNA accessibility is regulated via a complex set of post-translational modifications of histones, also called histone code, and nucleosome remodeling. This Mycosarcoma maydis (Corn smut fungus) protein is Histone H3.2 (HHT2).